We begin with the raw amino-acid sequence, 319 residues long: Acetyl esterase (319 aa).

Positions 91–93 (HGG) match the Involved in the stabilization of the negatively charged intermediate by the formation of the oxyanion hole motif. Active-site residues include serine 165, aspartate 262, and histidine 292.

The protein belongs to the 'GDXG' lipolytic enzyme family. Homodimer. Interacts with MalT and MelA.

It is found in the cytoplasm. In terms of biological role, displays esterase activity towards short chain fatty esters (acyl chain length of up to 8 carbons). Able to hydrolyze triacetylglycerol (triacetin) and tributyrylglycerol (tributyrin), but not trioleylglycerol (triolein) or cholesterol oleate. Negatively regulates MalT activity by antagonizing maltotriose binding. Inhibits MelA galactosidase activity. The chain is Acetyl esterase from Escherichia coli O127:H6 (strain E2348/69 / EPEC).